Reading from the N-terminus, the 1139-residue chain is Liprin-alpha (1139 aa).

Coiled coils occupy residues 30–144 (PSDR…SLRM), 172–298 (EHHK…KNQI), 329–517 (IRDL…AQFQ), and 655–701 (QDAQ…EFYD). Disordered regions lie at residues 700 to 720 (YDDQ…LDNM) and 764 to 847 (NQFD…DRRK). Composition is skewed to polar residues over residues 704 to 719 (GIST…QLDN) and 778 to 787 (PASSVASSTD). SAM domains follow at residues 867-933 (WNGP…MVSL), 952-1016 (NHEY…LKKV), and 1040-1109 (WSNE…LVND).

The protein belongs to the liprin family. Liprin-alpha subfamily. In terms of tissue distribution, detected in vulval muscle and other cells near the vulva; in neurons located in the lateral ganglion, posterior ganglion, ventral cord and lateral body; and in pharyngeal and body wall muscle cells.

It localises to the synapse. Functionally, may play a role in regulating the structure of the neuronal region, called the active zone, from which synaptic vesicles send neurotransmitter signals across the synapse. This may be in association with the liprin-beta protein hlb-1. The sequence is that of Liprin-alpha from Caenorhabditis elegans.